A 252-amino-acid polypeptide reads, in one-letter code: Probable S-methyl-5'-thioinosine phosphorylase (252 aa).

Phosphate is bound by residues Thr-8 and 44 to 45 (RH). Met-173 lines the substrate pocket. Residue Thr-174 participates in phosphate binding. 197–199 (NYA) is a binding site for substrate.

The protein belongs to the PNP/MTAP phosphorylase family. MTAP subfamily. Homotrimer.

It catalyses the reaction S-methyl-5'-thioinosine + phosphate = 5-(methylsulfanyl)-alpha-D-ribose 1-phosphate + hypoxanthine. It participates in purine metabolism; purine nucleoside salvage. In terms of biological role, catalyzes the reversible phosphorylation of S-methyl-5'-thioinosine (MTI) to hypoxanthine and 5-methylthioribose-1-phosphate. Involved in the breakdown of S-methyl-5'-thioadenosine (MTA), a major by-product of polyamine biosynthesis. Catabolism of (MTA) occurs via deamination to MTI and phosphorolysis to hypoxanthine. The protein is Probable S-methyl-5'-thioinosine phosphorylase of Methanocaldococcus jannaschii (strain ATCC 43067 / DSM 2661 / JAL-1 / JCM 10045 / NBRC 100440) (Methanococcus jannaschii).